The following is a 374-amino-acid chain: PqqA peptide cyclase (374 aa).

The region spanning 7–222 (VTPPLWLLAE…VADYRQRMGA (216 aa)) is the Radical SAM core domain. [4Fe-4S] cluster-binding residues include Cys-21, Cys-25, and Cys-28.

The protein belongs to the radical SAM superfamily. PqqE family. Interacts with PqqD. The interaction is necessary for activity of PqqE. It depends on [4Fe-4S] cluster as a cofactor.

The enzyme catalyses [PQQ precursor protein] + S-adenosyl-L-methionine = E-Y cross-linked-[PQQ precursor protein] + 5'-deoxyadenosine + L-methionine + H(+). It functions in the pathway cofactor biosynthesis; pyrroloquinoline quinone biosynthesis. In terms of biological role, catalyzes the cross-linking of a glutamate residue and a tyrosine residue in the PqqA protein as part of the biosynthesis of pyrroloquinoline quinone (PQQ). This Kluyvera intermedia (Enterobacter intermedius) protein is PqqA peptide cyclase.